We begin with the raw amino-acid sequence, 389 residues long: Succinate--CoA ligase [ADP-forming] subunit beta (389 aa).

The 236-residue stretch at 9-244 (KEILRKFGVA…LDEEDPAEVE (236 aa)) folds into the ATP-grasp domain. ATP contacts are provided by residues K46, 53 to 55 (GRG), E99, A102, and E107. Positions 199 and 213 each coordinate Mg(2+). Residues N264 and 321–323 (GIM) each bind substrate.

This sequence belongs to the succinate/malate CoA ligase beta subunit family. Heterotetramer of two alpha and two beta subunits. The cofactor is Mg(2+).

It carries out the reaction succinate + ATP + CoA = succinyl-CoA + ADP + phosphate. It catalyses the reaction GTP + succinate + CoA = succinyl-CoA + GDP + phosphate. The protein operates within carbohydrate metabolism; tricarboxylic acid cycle; succinate from succinyl-CoA (ligase route): step 1/1. Its function is as follows. Succinyl-CoA synthetase functions in the citric acid cycle (TCA), coupling the hydrolysis of succinyl-CoA to the synthesis of either ATP or GTP and thus represents the only step of substrate-level phosphorylation in the TCA. The beta subunit provides nucleotide specificity of the enzyme and binds the substrate succinate, while the binding sites for coenzyme A and phosphate are found in the alpha subunit. This is Succinate--CoA ligase [ADP-forming] subunit beta from Paraburkholderia xenovorans (strain LB400).